Reading from the N-terminus, the 103-residue chain is Pyrimidine/purine nucleoside phosphorylase (103 aa).

Belongs to the nucleoside phosphorylase PpnP family.

The catalysed reaction is a purine D-ribonucleoside + phosphate = a purine nucleobase + alpha-D-ribose 1-phosphate. It catalyses the reaction adenosine + phosphate = alpha-D-ribose 1-phosphate + adenine. It carries out the reaction cytidine + phosphate = cytosine + alpha-D-ribose 1-phosphate. The enzyme catalyses guanosine + phosphate = alpha-D-ribose 1-phosphate + guanine. The catalysed reaction is inosine + phosphate = alpha-D-ribose 1-phosphate + hypoxanthine. It catalyses the reaction thymidine + phosphate = 2-deoxy-alpha-D-ribose 1-phosphate + thymine. It carries out the reaction uridine + phosphate = alpha-D-ribose 1-phosphate + uracil. The enzyme catalyses xanthosine + phosphate = alpha-D-ribose 1-phosphate + xanthine. In terms of biological role, catalyzes the phosphorolysis of diverse nucleosides, yielding D-ribose 1-phosphate and the respective free bases. Can use uridine, adenosine, guanosine, cytidine, thymidine, inosine and xanthosine as substrates. Also catalyzes the reverse reactions. The chain is Pyrimidine/purine nucleoside phosphorylase from Shewanella sp. (strain MR-4).